The primary structure comprises 295 residues: ATP synthase gamma chain (295 aa).

It belongs to the ATPase gamma chain family. F-type ATPases have 2 components, CF(1) - the catalytic core - and CF(0) - the membrane proton channel. CF(1) has five subunits: alpha(3), beta(3), gamma(1), delta(1), epsilon(1). CF(0) has three main subunits: a, b and c.

It is found in the cell membrane. Its function is as follows. Produces ATP from ADP in the presence of a proton gradient across the membrane. The gamma chain is believed to be important in regulating ATPase activity and the flow of protons through the CF(0) complex. This is ATP synthase gamma chain from Acetivibrio thermocellus (strain ATCC 27405 / DSM 1237 / JCM 9322 / NBRC 103400 / NCIMB 10682 / NRRL B-4536 / VPI 7372) (Clostridium thermocellum).